The chain runs to 415 residues: L-cysteine:1D-myo-inositol 2-amino-2-deoxy-alpha-D-glucopyranoside ligase (415 aa).

Position 43 (cysteine 43) interacts with Zn(2+). L-cysteinyl-5'-AMP contacts are provided by residues 43–46 (CGIT), threonine 58, and 81–83 (NVT). The short motif at 45 to 55 (ITPYDATHLGH) is the 'HIGH' region element. The short motif at 187 to 192 (ERGGDP) is the 'ERGGDP' region element. L-cysteinyl-5'-AMP is bound at residue tryptophan 227. A Zn(2+)-binding site is contributed by cysteine 231. 249-251 (GSD) lines the L-cysteinyl-5'-AMP pocket. Histidine 256 provides a ligand contact to Zn(2+). Position 283 (isoleucine 283) interacts with L-cysteinyl-5'-AMP. Positions 289 to 293 (KMSKS) match the 'KMSKS' region motif.

The protein belongs to the class-I aminoacyl-tRNA synthetase family. MshC subfamily. As to quaternary structure, monomer. Zn(2+) serves as cofactor.

The enzyme catalyses 1D-myo-inositol 2-amino-2-deoxy-alpha-D-glucopyranoside + L-cysteine + ATP = 1D-myo-inositol 2-(L-cysteinylamino)-2-deoxy-alpha-D-glucopyranoside + AMP + diphosphate + H(+). Functionally, catalyzes the ATP-dependent condensation of GlcN-Ins and L-cysteine to form L-Cys-GlcN-Ins. The protein is L-cysteine:1D-myo-inositol 2-amino-2-deoxy-alpha-D-glucopyranoside ligase of Saccharomonospora viridis (strain ATCC 15386 / DSM 43017 / JCM 3036 / CCUG 5913 / NBRC 12207 / NCIMB 9602 / P101) (Thermoactinomyces viridis).